The sequence spans 337 residues: Succinylglutamate desuccinylase (337 aa).

H59, E62, and H152 together coordinate Zn(2+). E216 is an active-site residue.

The protein belongs to the AspA/AstE family. Succinylglutamate desuccinylase subfamily. Requires Zn(2+) as cofactor.

It catalyses the reaction N-succinyl-L-glutamate + H2O = L-glutamate + succinate. It functions in the pathway amino-acid degradation; L-arginine degradation via AST pathway; L-glutamate and succinate from L-arginine: step 5/5. In terms of biological role, transforms N(2)-succinylglutamate into succinate and glutamate. In Ectopseudomonas mendocina (strain ymp) (Pseudomonas mendocina), this protein is Succinylglutamate desuccinylase.